The primary structure comprises 315 residues: Ribosomal RNA small subunit methyltransferase H (315 aa).

S-adenosyl-L-methionine-binding positions include 32–34, Asp52, Phe78, Asp100, and Gln107; that span reads GGH.

Belongs to the methyltransferase superfamily. RsmH family.

It localises to the cytoplasm. The enzyme catalyses cytidine(1402) in 16S rRNA + S-adenosyl-L-methionine = N(4)-methylcytidine(1402) in 16S rRNA + S-adenosyl-L-homocysteine + H(+). In terms of biological role, specifically methylates the N4 position of cytidine in position 1402 (C1402) of 16S rRNA. The sequence is that of Ribosomal RNA small subunit methyltransferase H from Psychromonas ingrahamii (strain DSM 17664 / CCUG 51855 / 37).